Here is a 240-residue protein sequence, read N- to C-terminus: DNA repair protein RecO (240 aa).

The protein belongs to the RecO family.

Involved in DNA repair and RecF pathway recombination. The polypeptide is DNA repair protein RecO (Actinobacillus pleuropneumoniae serotype 5b (strain L20)).